The sequence spans 437 residues: Trigger factor (437 aa).

One can recognise a PPIase FKBP-type domain in the interval 163–248 (GDIAVINFEG…LNQIKAKVLP (86 aa)).

This sequence belongs to the FKBP-type PPIase family. Tig subfamily.

It localises to the cytoplasm. The enzyme catalyses [protein]-peptidylproline (omega=180) = [protein]-peptidylproline (omega=0). Its function is as follows. Involved in protein export. Acts as a chaperone by maintaining the newly synthesized protein in an open conformation. Functions as a peptidyl-prolyl cis-trans isomerase. The sequence is that of Trigger factor from Bdellovibrio bacteriovorus (strain ATCC 15356 / DSM 50701 / NCIMB 9529 / HD100).